We begin with the raw amino-acid sequence, 33 residues long: Imperacalcin (33 aa).

3 disulfides stabilise this stretch: cysteine 3–cysteine 17, cysteine 10–cysteine 21, and cysteine 16–cysteine 32. Important for stimulation of [3H]ryanodine binding to RYR1 stretches follow at residues 8-9 (KR) and 19-20 (KK). The essential for stimulation of [3H]ryanodine binding to RYR1 stretch occupies residues 22-24 (KRR). The tract at residues 25 to 27 (GTN) is important for stimulation of [3H]ryanodine binding to RYR1.

The protein belongs to the scorpion calcin family. In terms of tissue distribution, expressed by the venom gland.

It is found in the secreted. This toxin affects the activity of ryanodine receptors 1, 2 and 3 (RyR1, RyR2 and RyR3). At lower concentrations the toxin increases full openings of the RyRs, and at higher concentrations it inhibits full openings and induces openings to subconductance levels (30% of the full conductance state) and reduces the number of full conductance openings. The different actions may be attributed to the toxins binding at different sites on the RyRs, with binding at a high-affinity site mediating the increase in full openings and the induction of subconductance states evoked upon binding to a lower-affinity site. Furthermore, it triggers calcium release from sarcoplasmic vesicles (11.7 nM are enough to induce a sharp release, and 70% of the total calcium is released after toxin (100 nM) addition) probably by acting as a cell-penetrating peptide (CPP). In addition, it has been shown to dose-dependently stimulate ryanodine binding to RyR1 (EC(50)=8.7 nM). It also augments the bell-shaped calcium-[3H]ryanodine binding curve that is maximal at about 10 uM calcium concentration. It binds a different site as ryanodine. It acts synergistically with caffeine. In vivo, intracerebroventricular injection into mice induces neurotoxic symptoms, followed by death. This Pandinus imperator (Emperor scorpion) protein is Imperacalcin.